The following is a 339-amino-acid chain: GTPase Obg (339 aa).

The region spanning 1–159 is the Obg domain; it reads MKFLDQAKVY…RALWLRLKLI (159 aa). Residues 160 to 327 form the OBG-type G domain; the sequence is ADGGIIGLPN…VLRSVAHVIE (168 aa). GTP contacts are provided by residues 166 to 173, 191 to 195, 212 to 215, 279 to 282, and 308 to 310; these read GLPNAGKS, FTTLY, DIPG, SQVD, and SAV. Mg(2+) is bound by residues Ser-173 and Thr-193.

It belongs to the TRAFAC class OBG-HflX-like GTPase superfamily. OBG GTPase family. In terms of assembly, monomer. Mg(2+) is required as a cofactor.

Its subcellular location is the cytoplasm. An essential GTPase which binds GTP, GDP and possibly (p)ppGpp with moderate affinity, with high nucleotide exchange rates and a fairly low GTP hydrolysis rate. Plays a role in control of the cell cycle, stress response, ribosome biogenesis and in those bacteria that undergo differentiation, in morphogenesis control. The polypeptide is GTPase Obg (Bartonella bacilliformis (strain ATCC 35685 / KC583 / Herrer 020/F12,63)).